The primary structure comprises 251 residues: 2-amino-5-chloromuconate deaminase (251 aa).

Monomer.

It carries out the reaction (2Z,4E)-2-aminomuconate + H2O = (2Z,4E)-2-hydroxyhexa-2,4-dienedioate + NH4(+). Its pathway is xenobiotic degradation; 4-chloronitrobenzene degradation. It participates in xenobiotic degradation; nitrobenzene degradation. Its activity is regulated as follows. Cysteine residue modifying agents such as p-chloromercuribenzoate and the SH-binding metals Zn(2+), Ni(2+) and Cu(2+) completely inhibit deaminase activity, whereas Ca(2+), Mg(2+) and the histidine residue-modifying agent diethyl pyrocarbonate inhibit the activity by 23 to 50%. In terms of biological role, involved in the biodegradation of xenobiotic compounds, such as nitrobenzene and 4-chloronitrobenzene (4-CNB). CnbZ preferentially catalyzes the deamination of 2-amino-5-chloromuconate (2A5CM) to yield 2-hydroxy-5-chloromuconate (2H5CM). Also able to catalyze the deamination of 2-aminomuconate to yield 2-hydroxymuconate, which spontaneously converts into its keto form, 2-oxalocrotonate. The polypeptide is 2-amino-5-chloromuconate deaminase (Comamonas testosteroni (Pseudomonas testosteroni)).